A 294-amino-acid polypeptide reads, in one-letter code: 4-hydroxy-tetrahydrodipicolinate synthase (294 aa).

T45 is a pyruvate binding site. Y133 serves as the catalytic Proton donor/acceptor. K161 serves as the catalytic Schiff-base intermediate with substrate. A pyruvate-binding site is contributed by I203.

This sequence belongs to the DapA family. As to quaternary structure, homotetramer; dimer of dimers.

Its subcellular location is the cytoplasm. The catalysed reaction is L-aspartate 4-semialdehyde + pyruvate = (2S,4S)-4-hydroxy-2,3,4,5-tetrahydrodipicolinate + H2O + H(+). It participates in amino-acid biosynthesis; L-lysine biosynthesis via DAP pathway; (S)-tetrahydrodipicolinate from L-aspartate: step 3/4. Catalyzes the condensation of (S)-aspartate-beta-semialdehyde [(S)-ASA] and pyruvate to 4-hydroxy-tetrahydrodipicolinate (HTPA). The polypeptide is 4-hydroxy-tetrahydrodipicolinate synthase (Shewanella frigidimarina (strain NCIMB 400)).